The following is a 333-amino-acid chain: MAKLYYEKDCNLEVLKGKKVAIIGYGSQGHAHALNLKNSGVDVVVGLYEGSKSWERAEAEGLKVAVASDAAAEADVVVILVNDEKQVQVYEESIKPNLTAGKYLMFAHGFNIHYGQIVPSEDVNVFMVAPKGPGHTVRSQYQEGKGVPCLVSVYQDATGNTMDVALAYAAGIGGARAGVLKTTFKEETETDLFGEQAVLCGGVTELMKVGFEVLVEAGYEPESAYFECVHEMKLIIDMVVEGGLGNMRQSISDTAEYGDYSVGKRIITDETKKEMKKVLHEVQDGTFARNWILENKANRPAFTARRRMEQSHQVEVVGKELRDMMSWSKQSKK.

The 181-residue stretch at 2-182 (AKLYYEKDCN…GGARAGVLKT (181 aa)) folds into the KARI N-terminal Rossmann domain. Residues 25-28 (YGSQ), serine 51, serine 53, and 83-86 (DEKQ) each bind NADP(+). Residue histidine 108 is part of the active site. Glycine 134 lines the NADP(+) pocket. In terms of domain architecture, KARI C-terminal knotted spans 183–328 (TFKEETETDL…KELRDMMSWS (146 aa)). Aspartate 191, glutamate 195, glutamate 227, and glutamate 231 together coordinate Mg(2+). Serine 252 provides a ligand contact to substrate.

Belongs to the ketol-acid reductoisomerase family. The cofactor is Mg(2+).

The enzyme catalyses (2R)-2,3-dihydroxy-3-methylbutanoate + NADP(+) = (2S)-2-acetolactate + NADPH + H(+). It carries out the reaction (2R,3R)-2,3-dihydroxy-3-methylpentanoate + NADP(+) = (S)-2-ethyl-2-hydroxy-3-oxobutanoate + NADPH + H(+). It functions in the pathway amino-acid biosynthesis; L-isoleucine biosynthesis; L-isoleucine from 2-oxobutanoate: step 2/4. The protein operates within amino-acid biosynthesis; L-valine biosynthesis; L-valine from pyruvate: step 2/4. Involved in the biosynthesis of branched-chain amino acids (BCAA). Catalyzes an alkyl-migration followed by a ketol-acid reduction of (S)-2-acetolactate (S2AL) to yield (R)-2,3-dihydroxy-isovalerate. In the isomerase reaction, S2AL is rearranged via a Mg-dependent methyl migration to produce 3-hydroxy-3-methyl-2-ketobutyrate (HMKB). In the reductase reaction, this 2-ketoacid undergoes a metal-dependent reduction by NADPH to yield (R)-2,3-dihydroxy-isovalerate. This chain is Ketol-acid reductoisomerase (NADP(+)), found in Alkaliphilus metalliredigens (strain QYMF).